A 351-amino-acid polypeptide reads, in one-letter code: Photosystem II D2 protein (351 aa).

Residues 39 to 59 (TAYLAIGGWLTGTTFVTSWYT) traverse the membrane as a helical segment. Histidine 116 contacts chlorophyll a. Residues 123 to 139 (GFMLRQFELARLIGIRP) traverse the membrane as a helical segment. Pheophytin a is bound by residues glutamine 128 and asparagine 141. The chain crosses the membrane as a helical span at residues 151-164 (VFVSVFLLYPLGQS). Histidine 196 lines the chlorophyll a pocket. The chain crosses the membrane as a helical span at residues 206–226 (GALLSAIHGVTVENTLYEDGE). 2 residues coordinate a plastoquinone: histidine 213 and phenylalanine 260. Histidine 213 contacts Fe cation. Histidine 267 serves as a coordination point for Fe cation. A helical membrane pass occupies residues 277–293 (GLWTSSIGIIGLALNLR).

It belongs to the reaction center PufL/M/PsbA/D family. PSII is composed of 1 copy each of membrane proteins PsbA, PsbB, PsbC, PsbD, PsbE, PsbF, PsbH, PsbI, PsbJ, PsbK, PsbL, PsbM, PsbT, PsbX, PsbY, PsbZ, Psb30/Ycf12, peripheral proteins PsbO, CyanoQ (PsbQ), PsbU, PsbV and a large number of cofactors. It forms dimeric complexes. It depends on The D1/D2 heterodimer binds P680, chlorophylls that are the primary electron donor of PSII, and subsequent electron acceptors. It shares a non-heme iron and each subunit binds pheophytin, quinone, additional chlorophylls, carotenoids and lipids. There is also a Cl(-1) ion associated with D1 and D2, which is required for oxygen evolution. The PSII complex binds additional chlorophylls, carotenoids and specific lipids. as a cofactor.

Its subcellular location is the host cellular thylakoid membrane. The catalysed reaction is 2 a plastoquinone + 4 hnu + 2 H2O = 2 a plastoquinol + O2. Its function is as follows. Photosystem II (PSII) is a light-driven water:plastoquinone oxidoreductase that uses light energy to abstract electrons from H(2)O, generating O(2) and a proton gradient subsequently used for ATP formation. It consists of a core antenna complex that captures photons, and an electron transfer chain that converts photonic excitation into a charge separation. The D1/D2 (PsbA/PsbD) reaction center heterodimer binds P680, the primary electron donor of PSII as well as several subsequent electron acceptors. D2 is needed for assembly of a stable PSII complex. This chain is Photosystem II D2 protein (psbD), found in Synechococcus.